The primary structure comprises 219 residues: MADLIFQDWGLINYDEALKKQNDLVEKVHTEDLPGFLVFCTHPPVVTVGRATQAGDVFSWNGPVVEVTRGGRATYHGPSQLVVYPILNLAHVRKGRKDREINPYLKVFEDAIVDVLKTYGLTGIEGRSSAKSSFNRADADDTGVWVNDLKIASVGVGVRKWVAFHGAAINLTFDEKAFLGLRPCGFPSEVMVSLEQLTGAKVDVGEFKEKLKRRLLEVL.

Residues 31–219 (EDLPGFLVFC…KLKRRLLEVL (189 aa)) form the BPL/LPL catalytic domain. Residues 69–76 (RGGRATYH), 153–155 (SVG), and 166–168 (GAA) each bind substrate. The active-site Acyl-thioester intermediate is the Cys-184.

This sequence belongs to the LipB family.

It is found in the cytoplasm. The enzyme catalyses octanoyl-[ACP] + L-lysyl-[protein] = N(6)-octanoyl-L-lysyl-[protein] + holo-[ACP] + H(+). The protein operates within protein modification; protein lipoylation via endogenous pathway; protein N(6)-(lipoyl)lysine from octanoyl-[acyl-carrier-protein]: step 1/2. Functionally, catalyzes the transfer of endogenously produced octanoic acid from octanoyl-acyl-carrier-protein onto the lipoyl domains of lipoate-dependent enzymes. Lipoyl-ACP can also act as a substrate although octanoyl-ACP is likely to be the physiological substrate. The polypeptide is Octanoyltransferase (Bdellovibrio bacteriovorus (strain ATCC 15356 / DSM 50701 / NCIMB 9529 / HD100)).